The following is a 197-amino-acid chain: MSSKEQKTPEGQAPEEIIMDQHEEIEAVEPEASAEQVDPRDEKIANLEAQLAEAQTRERDGILRVKAEMENLRRRTELDIEKAHKFALEKFINELLPVIDSLDRALEVADKANPDMSAMVEGIELTLKSMLDVVRKFGVEVIAETNVPLDPNVHQAIAMVESDDVAPGNVLGIMQKGYTLNGRTIRAAMVTVAKVKA.

A disordered region spans residues 1 to 39 (MSSKEQKTPEGQAPEEIIMDQHEEIEAVEPEASAEQVDP).

Belongs to the GrpE family. As to quaternary structure, homodimer.

It is found in the cytoplasm. Participates actively in the response to hyperosmotic and heat shock by preventing the aggregation of stress-denatured proteins, in association with DnaK and GrpE. It is the nucleotide exchange factor for DnaK and may function as a thermosensor. Unfolded proteins bind initially to DnaJ; upon interaction with the DnaJ-bound protein, DnaK hydrolyzes its bound ATP, resulting in the formation of a stable complex. GrpE releases ADP from DnaK; ATP binding to DnaK triggers the release of the substrate protein, thus completing the reaction cycle. Several rounds of ATP-dependent interactions between DnaJ, DnaK and GrpE are required for fully efficient folding. This Escherichia coli O157:H7 (strain EC4115 / EHEC) protein is Protein GrpE.